A 496-amino-acid polypeptide reads, in one-letter code: NADP-dependent glyceraldehyde-3-phosphate dehydrogenase (496 aa).

Substrate is bound by residues arginine 116 and 169–170 (NY). NADP(+) is bound by residues lysine 192, threonine 195, and aspartate 230. 245 to 249 (GGDTG) contributes to the NAD(+) binding site. The Proton acceptor role is filled by glutamate 264. 297–299 (RCT) serves as a coordination point for substrate. The active-site Nucleophile is the cysteine 298. Position 391 (glutamate 391) interacts with NADP(+). Serine 404 is subject to Phosphoserine. Arginine 451 is a substrate binding site.

This sequence belongs to the aldehyde dehydrogenase family. As to quaternary structure, interacts with 14-3-3 protein when phosphorylated. This interaction is released by divalent cations. Post-translationally, phosphorylated in shoots and non-photosynthetic tissues, but not in leaves.

Its subcellular location is the cytoplasm. The enzyme catalyses D-glyceraldehyde 3-phosphate + NADP(+) + H2O = (2R)-3-phosphoglycerate + NADPH + 2 H(+). With respect to regulation, insensitive to magnesium or calcium when dephosphorylated. When phosphorylated, 3-fold activation by magnesium or calcium, 2-fold activation by potassium, inhibited by ADP and AMP and insensitive to ATP or PPi. Its function is as follows. Important as a means of generating NADPH for biosynthetic reactions. The protein is NADP-dependent glyceraldehyde-3-phosphate dehydrogenase (GAPN) of Triticum aestivum (Wheat).